Here is a 306-residue protein sequence, read N- to C-terminus: Nucleotide-binding protein MUL_1815 (306 aa).

29–36 (GLSGAGRG) is a binding site for ATP. 80–83 (DVRS) lines the GTP pocket.

This sequence belongs to the RapZ-like family.

Functionally, displays ATPase and GTPase activities. This is Nucleotide-binding protein MUL_1815 from Mycobacterium ulcerans (strain Agy99).